Consider the following 187-residue polypeptide: Ubiquinone biosynthesis protein COQ4 homolog, mitochondrial (187 aa).

Residues H77, D78, H81, and E93 each contribute to the Zn(2+) site.

Belongs to the COQ4 family. Component of a multi-subunit COQ enzyme complex. Requires Zn(2+) as cofactor.

Its subcellular location is the mitochondrion inner membrane. It catalyses the reaction a 4-hydroxy-3-methoxy-5-(all-trans-polyprenyl)benzoate + H(+) = a 2-methoxy-6-(all-trans-polyprenyl)phenol + CO2. It participates in cofactor biosynthesis; ubiquinone biosynthesis. Functionally, lyase that catalyzes the C1-decarboxylation of 4-hydroxy-3-methoxy-5-(all-trans-polyprenyl)benzoic acid into 2-methoxy-6-(all-trans-polyprenyl)phenol during ubiquinone biosynthesis. The chain is Ubiquinone biosynthesis protein COQ4 homolog, mitochondrial from Leishmania infantum.